The sequence spans 225 residues: THAP domain-containing protein 1 B (225 aa).

A THAP-type zinc finger spans residues 5–57 (CSAYGCKNRYDKDRPISFHKFPLKRPLLCKKWEAAVRRADFKPTKYSSICSDH). Residues 139-194 (VEDTVHQRRRIQQLEEQVDKLRKKLKIANQKCRRQERSLEKLEKEVSEYREAKGSG) are a coiled coil.

Belongs to the THAP1 family.

The protein resides in the nucleus. It localises to the nucleoplasm. In terms of biological role, DNA-binding transcription regulator that regulates endothelial cell proliferation and G1/S cell-cycle progression. Specifically binds the 5'-[AT]NTNN[GT]GGCA[AGT]-3' core DNA sequence and acts by modulating expression of pRB-E2F cell-cycle target genes. The polypeptide is THAP domain-containing protein 1 B (thap1-b) (Xenopus laevis (African clawed frog)).